The sequence spans 229 residues: Protein GrpE (229 aa).

Disordered regions lie at residues 1–49 and 207–229; these read MTEG…SANS and DSTA…EDGD. The segment covering 13-24 has biased composition (basic and acidic residues); it reads TDKRRIDPDTGE.

Belongs to the GrpE family. In terms of assembly, homodimer.

It localises to the cytoplasm. Functionally, participates actively in the response to hyperosmotic and heat shock by preventing the aggregation of stress-denatured proteins, in association with DnaK and GrpE. It is the nucleotide exchange factor for DnaK and may function as a thermosensor. Unfolded proteins bind initially to DnaJ; upon interaction with the DnaJ-bound protein, DnaK hydrolyzes its bound ATP, resulting in the formation of a stable complex. GrpE releases ADP from DnaK; ATP binding to DnaK triggers the release of the substrate protein, thus completing the reaction cycle. Several rounds of ATP-dependent interactions between DnaJ, DnaK and GrpE are required for fully efficient folding. The chain is Protein GrpE from Mycobacterium leprae (strain TN).